A 294-amino-acid chain; its full sequence is Small ribosomal subunit biogenesis GTPase RsgA (294 aa).

Residues 63–223 (KNELLRPPIA…VADTPGFSSL (161 aa)) enclose the CP-type G domain. Residues 112 to 115 (SKID) and 166 to 174 (GQSGVGKSS) contribute to the GTP site. 4 residues coordinate Zn(2+): Cys-247, Cys-252, His-254, and Cys-260.

It belongs to the TRAFAC class YlqF/YawG GTPase family. RsgA subfamily. As to quaternary structure, monomer. Associates with 30S ribosomal subunit, binds 16S rRNA. Zn(2+) is required as a cofactor.

It localises to the cytoplasm. Functionally, one of several proteins that assist in the late maturation steps of the functional core of the 30S ribosomal subunit. Helps release RbfA from mature subunits. May play a role in the assembly of ribosomal proteins into the subunit. Circularly permuted GTPase that catalyzes slow GTP hydrolysis, GTPase activity is stimulated by the 30S ribosomal subunit. The polypeptide is Small ribosomal subunit biogenesis GTPase RsgA (Halalkalibacterium halodurans (strain ATCC BAA-125 / DSM 18197 / FERM 7344 / JCM 9153 / C-125) (Bacillus halodurans)).